Reading from the N-terminus, the 234-residue chain is Glucosamine-6-phosphate deaminase (234 aa).

Asp62 acts as the Proton acceptor; for enolization step in catalysis. Asn128 (for ring-opening step) is an active-site residue. Catalysis depends on His130, which acts as the Proton acceptor; for ring-opening step. Glu135 (for ring-opening step) is an active-site residue.

Belongs to the glucosamine/galactosamine-6-phosphate isomerase family. NagB subfamily.

It carries out the reaction alpha-D-glucosamine 6-phosphate + H2O = beta-D-fructose 6-phosphate + NH4(+). It participates in amino-sugar metabolism; N-acetylneuraminate degradation; D-fructose 6-phosphate from N-acetylneuraminate: step 5/5. Catalyzes the reversible isomerization-deamination of glucosamine 6-phosphate (GlcN6P) to form fructose 6-phosphate (Fru6P) and ammonium ion. The polypeptide is Glucosamine-6-phosphate deaminase (Streptococcus uberis (strain ATCC BAA-854 / 0140J)).